A 342-amino-acid polypeptide reads, in one-letter code: D-alanine--D-alanine ligase (342 aa).

The region spanning 132 to 326 (KLYAKECGIE…VAKHLPKSKN (195 aa)) is the ATP-grasp domain. An ATP-binding site is contributed by 159 to 210 (EYPVIIKPNHLGSSIGVSVVYDSSELEYALDVAFEFDDEVLIEPFIEGIEEY). Residues Asp-282, Glu-294, and Asn-296 each coordinate Mg(2+).

It belongs to the D-alanine--D-alanine ligase family. Mg(2+) is required as a cofactor. Requires Mn(2+) as cofactor.

Its subcellular location is the cytoplasm. It carries out the reaction 2 D-alanine + ATP = D-alanyl-D-alanine + ADP + phosphate + H(+). It functions in the pathway cell wall biogenesis; peptidoglycan biosynthesis. Cell wall formation. The polypeptide is D-alanine--D-alanine ligase (Nitratiruptor sp. (strain SB155-2)).